The sequence spans 339 residues: Dihydroorotate dehydrogenase (quinone) (339 aa).

Residues 64 to 68 and threonine 88 contribute to the FMN site; that span reads AGADK. Lysine 68 provides a ligand contact to substrate. Substrate is bound at residue 113 to 117; the sequence is NRNGF. Residues asparagine 141 and asparagine 174 each contribute to the FMN site. Position 174 (asparagine 174) interacts with substrate. The active-site Nucleophile is the serine 177. Asparagine 179 contributes to the substrate binding site. Residues lysine 219 and threonine 247 each coordinate FMN. A substrate-binding site is contributed by 248 to 249; the sequence is NT. FMN is bound by residues glycine 270, glycine 299, and 320-321; that span reads YS.

It belongs to the dihydroorotate dehydrogenase family. Type 2 subfamily. As to quaternary structure, monomer. FMN serves as cofactor.

The protein resides in the cell membrane. The catalysed reaction is (S)-dihydroorotate + a quinone = orotate + a quinol. It functions in the pathway pyrimidine metabolism; UMP biosynthesis via de novo pathway; orotate from (S)-dihydroorotate (quinone route): step 1/1. Catalyzes the conversion of dihydroorotate to orotate with quinone as electron acceptor. This chain is Dihydroorotate dehydrogenase (quinone) (pyrD), found in Pasteurella multocida (strain Pm70).